A 226-amino-acid polypeptide reads, in one-letter code: 2-C-methyl-D-erythritol 4-phosphate cytidylyltransferase (226 aa).

This sequence belongs to the IspD/TarI cytidylyltransferase family. IspD subfamily.

It catalyses the reaction 2-C-methyl-D-erythritol 4-phosphate + CTP + H(+) = 4-CDP-2-C-methyl-D-erythritol + diphosphate. It participates in isoprenoid biosynthesis; isopentenyl diphosphate biosynthesis via DXP pathway; isopentenyl diphosphate from 1-deoxy-D-xylulose 5-phosphate: step 2/6. Functionally, catalyzes the formation of 4-diphosphocytidyl-2-C-methyl-D-erythritol from CTP and 2-C-methyl-D-erythritol 4-phosphate (MEP). This is 2-C-methyl-D-erythritol 4-phosphate cytidylyltransferase from Trichodesmium erythraeum (strain IMS101).